A 460-amino-acid polypeptide reads, in one-letter code: GTPase Der (460 aa).

EngA-type G domains lie at 2 to 164 (QSII…HEEF) and 196 to 368 (IRVG…ENFT). Residues 8–15 (GKPNVGKS), 55–59 (DSGGL), 116–119 (NKVD), 202–209 (GRVNVGKS), 249–253 (DTAGI), and 313–316 (NKWD) contribute to the GTP site. The KH-like domain occupies 369–453 (QKIQTSKLNT…PLVIASRKKG (85 aa)).

Belongs to the TRAFAC class TrmE-Era-EngA-EngB-Septin-like GTPase superfamily. EngA (Der) GTPase family. In terms of assembly, associates with the 50S ribosomal subunit.

In terms of biological role, GTPase that plays an essential role in the late steps of ribosome biogenesis. The polypeptide is GTPase Der (Campylobacter jejuni subsp. jejuni serotype O:6 (strain 81116 / NCTC 11828)).